The primary structure comprises 721 residues: Fatty acid oxidation complex subunit alpha (721 aa).

The enoyl-CoA hydratase/isomerase stretch occupies residues 1-190 (MIYEGKAITV…KVGVVDAIVA (190 aa)). D297 lines the substrate pocket. Residues 312–721 (RDVKQAAVLG…SFFGQASSEV (410 aa)) form a 3-hydroxyacyl-CoA dehydrogenase region. Residues M325, D344, 401–403 (VVE), K408, and S430 each bind NAD(+). H451 acts as the For 3-hydroxyacyl-CoA dehydrogenase activity in catalysis. N454 provides a ligand contact to NAD(+). Positions 501 and 660 each coordinate substrate.

This sequence in the N-terminal section; belongs to the enoyl-CoA hydratase/isomerase family. In the C-terminal section; belongs to the 3-hydroxyacyl-CoA dehydrogenase family. Heterotetramer of two alpha chains (FadB) and two beta chains (FadA).

It catalyses the reaction a (3S)-3-hydroxyacyl-CoA + NAD(+) = a 3-oxoacyl-CoA + NADH + H(+). The catalysed reaction is a (3S)-3-hydroxyacyl-CoA = a (2E)-enoyl-CoA + H2O. It carries out the reaction a 4-saturated-(3S)-3-hydroxyacyl-CoA = a (3E)-enoyl-CoA + H2O. The enzyme catalyses (3S)-3-hydroxybutanoyl-CoA = (3R)-3-hydroxybutanoyl-CoA. It catalyses the reaction a (3Z)-enoyl-CoA = a 4-saturated (2E)-enoyl-CoA. The catalysed reaction is a (3E)-enoyl-CoA = a 4-saturated (2E)-enoyl-CoA. It functions in the pathway lipid metabolism; fatty acid beta-oxidation. Involved in the aerobic and anaerobic degradation of long-chain fatty acids via beta-oxidation cycle. Catalyzes the formation of 3-oxoacyl-CoA from enoyl-CoA via L-3-hydroxyacyl-CoA. It can also use D-3-hydroxyacyl-CoA and cis-3-enoyl-CoA as substrate. The sequence is that of Fatty acid oxidation complex subunit alpha from Pseudomonas syringae pv. tomato (strain ATCC BAA-871 / DC3000).